Reading from the N-terminus, the 283-residue chain is Protease HtpX (283 aa).

A run of 2 helical transmembrane segments spans residues 4-24 (IALF…ILSV) and 33-53 (GGIL…SLFM). His139 is a Zn(2+) binding site. The active site involves Glu140. His143 serves as a coordination point for Zn(2+). The next 2 membrane-spanning stretches (helical) occupy residues 147–167 (GDMV…IFLS) and 192–212 (FLVS…IAMW). Glu218 contacts Zn(2+).

It belongs to the peptidase M48B family. It depends on Zn(2+) as a cofactor.

It is found in the cell inner membrane. This is Protease HtpX from Glaesserella parasuis serovar 5 (strain SH0165) (Haemophilus parasuis).